The following is a 136-amino-acid chain: Large ribosomal subunit protein bL20c (136 aa).

It belongs to the bacterial ribosomal protein bL20 family.

It localises to the plastid. The protein resides in the chloroplast. Binds directly to 23S ribosomal RNA and is necessary for the in vitro assembly process of the 50S ribosomal subunit. It is not involved in the protein synthesizing functions of that subunit. This chain is Large ribosomal subunit protein bL20c, found in Huperzia lucidula (Shining clubmoss).